Here is a 355-residue protein sequence, read N- to C-terminus: Sulfate/thiosulfate import ATP-binding protein CysA (355 aa).

Residues 3–233 enclose the ABC transporter domain; it reads IIINNVSKQF…PASPFVMGFI (231 aa). 35-42 contributes to the ATP binding site; that stretch reads GPSGSGKS.

It belongs to the ABC transporter superfamily. Sulfate/tungstate importer (TC 3.A.1.6) family. As to quaternary structure, the complex is composed of two ATP-binding proteins (CysA), two transmembrane proteins (CysT and CysW) and a solute-binding protein (CysP).

It is found in the cell inner membrane. The catalysed reaction is sulfate(out) + ATP + H2O = sulfate(in) + ADP + phosphate + H(+). It catalyses the reaction thiosulfate(out) + ATP + H2O = thiosulfate(in) + ADP + phosphate + H(+). Functionally, part of the ABC transporter complex CysAWTP involved in sulfate/thiosulfate import. Responsible for energy coupling to the transport system. The chain is Sulfate/thiosulfate import ATP-binding protein CysA from Synechocystis sp. (strain ATCC 27184 / PCC 6803 / Kazusa).